Reading from the N-terminus, the 317-residue chain is tRNA-dihydrouridine(16) synthase (317 aa).

Residues 7 to 9 (PME) and Q68 each bind FMN. The active-site Proton donor is C98. Residues K139, 199–201 (NGE), and 223–224 (GR) each bind FMN.

Belongs to the Dus family. DusC subfamily. The cofactor is FMN.

It carries out the reaction 5,6-dihydrouridine(16) in tRNA + NADP(+) = uridine(16) in tRNA + NADPH + H(+). It catalyses the reaction 5,6-dihydrouridine(16) in tRNA + NAD(+) = uridine(16) in tRNA + NADH + H(+). Catalyzes the synthesis of 5,6-dihydrouridine (D), a modified base found in the D-loop of most tRNAs, via the reduction of the C5-C6 double bond in target uridines. Specifically modifies U16 in tRNAs. This chain is tRNA-dihydrouridine(16) synthase, found in Pseudomonas syringae pv. tomato (strain ATCC BAA-871 / DC3000).